The chain runs to 168 residues: Variant surface antigen D (168 aa).

The N-terminal stretch at 1–29 (MKKSIFSKKLLVSFGSLVTLAAIPLIAIS) is a signal peptide. Cys30 carries N-palmitoyl cysteine lipidation. A lipid anchor (S-diacylglycerol cysteine) is attached at Cys30. Residues 33 to 168 (TNTDQSQQPG…STSTSNMNTR (136 aa)) are disordered. Low complexity-rich tracts occupy residues 35–44 (TDQSQQPGSG) and 52–71 (GTTTGTDSTTGGQTGSESGT). Residues 72-81 (TTGGQTGTTT) are compositionally biased toward gly residues. Tandem repeats lie at residues 81–92 (TGGQSDSTSTSK), 93–104 (EQGSSDSTSTSK), 105–116 (EQGSSDSTSTSK), 117–128 (EQGSSDSTSTSK), 129–140 (EQGSSDSTSTSK), 141–152 (EQGSSDSTSTSK), and 153–164 (EQGSSDSTSTSN). Residues 81-164 (TGGQSDSTST…GSSDSTSTSN (84 aa)) are 7 X 12 AA tandem repeats. The segment covering 82–168 (GGQSDSTSTS…STSTSNMNTR (87 aa)) has biased composition (low complexity).

The protein resides in the cell membrane. In terms of biological role, responsible for the antigenic diversity for host adaptation. Expression in E.coli of a construct containing vlpD, vlpE, and vlpF yields antigenically distinguishable products corresponding to each gene. The chain is Variant surface antigen D (vlpD) from Mesomycoplasma hyorhinis (Mycoplasma hyorhinis).